The sequence spans 125 residues: 13 kDa ribonucleoprotein-associated protein (125 aa).

Belongs to the eukaryotic ribosomal protein eL8 family. In terms of assembly, component of the U3 snoRNP particle. Binds to the C'/D and B/C motifs in U3 snoRNA. Component of the 25S U4/U6.U5 tri-snRNP particle, a subcomplex of the spliceosome. Binds to the 5' stem-loop of U4 snRNA.

It is found in the nucleus. The protein localises to the nucleolus. Common component of the spliceosome and rRNA processing machinery. In association with the spliceosomal U4/U6.U5 tri-snRNP particle, required for splicing of pre-mRNA. In association with box C/D snoRNPs, required for processing of pre-ribosomal RNA (rRNA) and site-specific 2'-O-methylation of substrate RNAs. Essential for the accumulation and stability of U4 snRNA, U6 snRNA, and box C/D snoRNAs. The protein is 13 kDa ribonucleoprotein-associated protein (snu13) of Schizosaccharomyces pombe (strain 972 / ATCC 24843) (Fission yeast).